The primary structure comprises 59 residues: MSEIKVGENESLDNAIKRFKRQCARSGVLSEYRKREHYEKPSVKKKKKSEAAKRKKRNF.

Residues 35 to 59 are disordered; that stretch reads REHYEKPSVKKKKKSEAAKRKKRNF. Positions 43–59 are enriched in basic residues; that stretch reads VKKKKKSEAAKRKKRNF.

Belongs to the bacterial ribosomal protein bS21 family.

The polypeptide is Small ribosomal subunit protein bS21 (Finegoldia magna (strain ATCC 29328 / DSM 20472 / WAL 2508) (Peptostreptococcus magnus)).